Here is a 270-residue protein sequence, read N- to C-terminus: 3-phenylpropionate-dihydrodiol/cinnamic acid-dihydrodiol dehydrogenase (270 aa).

10–34 (FITGGGSGLGLALVERFIEEGAQVA) lines the NAD(+) pocket. Serine 143 serves as a coordination point for substrate. Catalysis depends on tyrosine 156, which acts as the Proton acceptor.

The protein belongs to the short-chain dehydrogenases/reductases (SDR) family.

It carries out the reaction 3-(cis-5,6-dihydroxycyclohexa-1,3-dien-1-yl)propanoate + NAD(+) = 3-(2,3-dihydroxyphenyl)propanoate + NADH + H(+). The catalysed reaction is (2E)-3-(cis-5,6-dihydroxycyclohexa-1,3-dien-1-yl)prop-2-enoate + NAD(+) = (2E)-3-(2,3-dihydroxyphenyl)prop-2-enoate + NADH + H(+). Its pathway is aromatic compound metabolism; 3-phenylpropanoate degradation. Converts 3-phenylpropionate-dihydrodiol (PP-dihydrodiol) and cinnamic acid-dihydrodiol (CI-dihydrodiol) into 3-(2,3-dihydroxylphenyl)propanoic acid (DHPP) and 2,3-dihydroxicinnamic acid (DHCI), respectively. The polypeptide is 3-phenylpropionate-dihydrodiol/cinnamic acid-dihydrodiol dehydrogenase (Escherichia coli (strain ATCC 8739 / DSM 1576 / NBRC 3972 / NCIMB 8545 / WDCM 00012 / Crooks)).